The following is a 440-amino-acid chain: MFCLNTFKSRWPREFQNLKKKKKKTCVKLSIPIRSVTGDAASLTVVVTMYKRDDYVRNKPGGVFSRWQGFARSMLLPKPFSETAELRRTVADYSLISRGLAPKILREAKGNREDLRVGKDFVGSRYRVQESIQGLGVAVNIHDADDISHGQTESIRTRLRSYGRPVPLLKKLGDNASQTITQKKTGGRSKDKKHGFEEERDVSRVEAEENNTNSVHASVLRLSRSRPQPVLERHDDIVDGSDSASVCGVLQEDGTTCLTAPVTGRKRCTEHKGQRITCAPPVKNPPCEEETEEICGVILPEMVRCRSKPVSGRKRCEDHKGMRVNAFFFLLNPTERDKILKEDKSKPKTRTSSTNQEEPGESLICEATTKNGLPCTRSAPNGSKRCWQHKDETVDQKSSENVQTSTTVCGVKLHNGSVCEKTPVKGRKRCQEHKGMRITS.

Positions 131-167 (SIQGLGVAVNIHDADDISHGQTESIRTRLRSYGRPVP) constitute a GIY-YIG domain. Residues 172–216 (LGDNASQTITQKKTGGRSKDKKHGFEEERDVSRVEAEENNTNSVH) are disordered. The segment covering 175-184 (NASQTITQKK) has biased composition (polar residues). Basic and acidic residues predominate over residues 194 to 207 (HGFEEERDVSRVEA). Cx9Cx9RCx2HK repeat units follow at residues 247-272 (CGVL…TEHK) and 295-320 (CGVI…EDHK). The interval 339-363 (ILKEDKSKPKTRTSSTNQEEPGESL) is disordered. Cx9Cx9RCx2HK repeat units lie at residues 365-390 (CEAT…WQHK) and 409-434 (CGVK…QEHK).

Its subcellular location is the nucleus. Its function is as follows. Transcription regulator that negatively modulates gibberellin-mediated developmental processes. May act as transcriptional repressor of giberellin controlled genes. Binds DNA without sequence preference. The chain is Protein EFFECTOR OF TRANSCRIPTION from Brassica napus (Rape).